Consider the following 97-residue polypeptide: Co-chaperonin GroES (97 aa).

Belongs to the GroES chaperonin family. In terms of assembly, heptamer of 7 subunits arranged in a ring. Interacts with the chaperonin GroEL.

It localises to the cytoplasm. Functionally, together with the chaperonin GroEL, plays an essential role in assisting protein folding. The GroEL-GroES system forms a nano-cage that allows encapsulation of the non-native substrate proteins and provides a physical environment optimized to promote and accelerate protein folding. GroES binds to the apical surface of the GroEL ring, thereby capping the opening of the GroEL channel. This Klebsiella aerogenes (Enterobacter aerogenes) protein is Co-chaperonin GroES.